The chain runs to 363 residues: Uptake hydrogenase small subunit (363 aa).

The segment at residues 1-43 (MIETFYEVMRRQGISRRSFLKYCSLTATSLGLSPVFVPKIVHA) is a signal peptide (tat-type signal). [4Fe-4S] cluster is bound by residues C60, C63, C158, C192, H230, C233, C258, and C264. 3 residues coordinate [3Fe-4S] cluster: C273, C292, and C295.

It belongs to the [NiFe]/[NiFeSe] hydrogenase small subunit family. In terms of assembly, heterodimer of a large and a small subunit. [4Fe-4S] cluster is required as a cofactor. Requires [3Fe-4S] cluster as cofactor. In terms of processing, predicted to be exported by the Tat system. The position of the signal peptide cleavage has not been experimentally proven.

It localises to the cell membrane. It catalyses the reaction H2 + A = AH2. In terms of biological role, this enzyme recycles the H(2) produced by nitrogenase to increase the production of ATP and to protect nitrogenase against inhibition or damage by O(2) under carbon- or phosphate-limited conditions. This is Uptake hydrogenase small subunit (hupS) from Alcaligenes hydrogenophilus.